Reading from the N-terminus, the 69-residue chain is Alpha-conotoxin Mr1.7a (69 aa).

The first 21 residues, 1 to 21 (MGMRMMFTVFLLVVLATTVVS), serve as a signal peptide directing secretion. Positions 22–49 (FTSNRVLDPAFRRRNAAAKASDLIALNA) are excised as a propeptide. A 4-hydroxyproline; in Mr1.7b mark is found at Pro-52 and Pro-58. Cystine bridges form between Cys-54–Cys-60 and Cys-55–Cys-68. The interval 56–58 (THP) is lacks the Ser-Xaa-Pro motif that is crucial for potent interaction with nAChR. Cys-68 is modified (cysteine amide).

It belongs to the conotoxin A superfamily. In terms of processing, two 4-hydroxyprolines have been detected by MS but the assignment of which of the three prolines is modified is uncertain. As to expression, expressed by the venom duct.

Its subcellular location is the secreted. Its function is as follows. Acts as a co-agonist with PNU (an alpha-7 nAChR-selective allosteric modulator) at the endogenous alpha-7/CHRNA7 nicotinic acetylcholine receptors (nAChR) when tested in human SH-SY5Y neuroblastoma cells. Is the third alpha-conotoxin that acts as an agonist (after alpha-conotoxin SrIA/SrIB). Also acts as an antagonist at human alpha-7 nAChRs heterologously expressed in Xenopus oocytes. Has possibly a distinct nAChR binding mode from other alpha-conotoxins, due to a different three residue motif (lacks the Ser-Xaa-Pro motif). Acts as a weak partial agonist at alpha-7/CHRNA7 nicotinic acetylcholine receptors (nAChR) when tested in human SH-SY5Y neuroblastoma cells. Has possibly a distinct nAChR binding mode from other alpha-conotoxins, due to a different three residue motif (lacks the Ser-Xaa-Pro motif). In Conus marmoreus (Marble cone), this protein is Alpha-conotoxin Mr1.7a.